The chain runs to 607 residues: Phosphoenolpyruvate carboxykinase [GTP] (607 aa).

Substrate-binding positions include R81 and 221–223 (YGG). Residues K230 and H250 each coordinate Mn(2+). S272 contacts substrate. Residue 273-278 (ACGKTN) participates in GTP binding. C274 is an active-site residue. D297 contributes to the Mn(2+) binding site. Residue 388-390 (NSR) coordinates substrate. GTP is bound by residues R390, R421, and 516–519 (FGDN).

Belongs to the phosphoenolpyruvate carboxykinase [GTP] family. In terms of assembly, monomer. Requires Mn(2+) as cofactor.

The protein resides in the cytoplasm. It catalyses the reaction oxaloacetate + GTP = phosphoenolpyruvate + GDP + CO2. The protein operates within carbohydrate biosynthesis; gluconeogenesis. Catalyzes the conversion of oxaloacetate (OAA) to phosphoenolpyruvate (PEP), the rate-limiting step in the metabolic pathway that produces glucose from lactate and other precursors derived from the citric acid cycle. This Renibacterium salmoninarum (strain ATCC 33209 / DSM 20767 / JCM 11484 / NBRC 15589 / NCIMB 2235) protein is Phosphoenolpyruvate carboxykinase [GTP].